The sequence spans 130 residues: uncharacterized protein (130 aa).

At 1 to 58 (MREQLKLFTREIVDFTFLILSGFDYYQTLLISSNSSKKRPKDSSLLSEKKKKKKKKKK) the chain is on the cytoplasmic side. Residues 34 to 57 (NSSKKRPKDSSLLSEKKKKKKKKK) form a disordered region. Residues 59–79 (DVLSYLSYLKDLPFVPFLFWQ) traverse the membrane as a helical segment. Topologically, residues 80-94 (PGYSQREKNPRQHSL) are extracellular. Residues 95–115 (FIMTITKPGMISMADMNYVVS) traverse the membrane as a helical segment. At 116-130 (KNRSLNRPAERGGNR) the chain is on the cytoplasmic side.

The protein localises to the membrane. This is an uncharacterized protein from Saccharomyces cerevisiae (strain ATCC 204508 / S288c) (Baker's yeast).